Reading from the N-terminus, the 276-residue chain is Exosome complex component RRP43 (276 aa).

A2 bears the N-acetylalanine mark.

This sequence belongs to the RNase PH family. In terms of assembly, component of the RNA exosome core complex (Exo-9), composed of EXOSC1, EXOSC2, EXOSC3, EXOSC4, EXOSC5, EXOSC6, EXOSC7, EXOSC8 and EXOSC9; within the complex interacts with EXOSC5 and EXOSC6. The catalytically inactive RNA exosome core complex (Exo-9) associates with the catalytic subunit EXOSC10/RRP6. Exo-9 may associate with DIS3 to form the nucleolar exosome complex, or DIS3L to form the cytoplasmic exosome complex. Exo-9 is formed by a hexameric base ring consisting of the heterodimers EXOSC4-EXOSC9, EXOSC5-EXOSC8 and EXOSC6-EXOSC7, and a cap ring consisting of EXOSC1, EXOSC2 and EXOSC3. The RNA exosome complex associates with cofactors C1D/RRP47, MPHOSPH6/MPP6 and MTREX/MTR4. Binds outer membrane protein opap from Neisseria gonorrhoeae.

It is found in the cytoplasm. The protein localises to the nucleus. The protein resides in the nucleolus. Non-catalytic component of the RNA exosome complex which has 3'-&gt;5' exoribonuclease activity and participates in a multitude of cellular RNA processing and degradation events. In the nucleus, the RNA exosome complex is involved in proper maturation of stable RNA species such as rRNA, snRNA and snoRNA, in the elimination of RNA processing by-products and non-coding 'pervasive' transcripts, such as antisense RNA species and promoter-upstream transcripts (PROMPTs), and of mRNAs with processing defects, thereby limiting or excluding their export to the cytoplasm. The RNA exosome may be involved in Ig class switch recombination (CSR) and/or Ig variable region somatic hypermutation (SHM) by targeting AICDA deamination activity to transcribed dsDNA substrates. In the cytoplasm, the RNA exosome complex is involved in general mRNA turnover and specifically degrades inherently unstable mRNAs containing AU-rich elements (AREs) within their 3' untranslated regions, and in RNA surveillance pathways, preventing translation of aberrant mRNAs. It seems to be involved in degradation of histone mRNA. The catalytic inactive RNA exosome core complex of 9 subunits (Exo-9) is proposed to play a pivotal role in the binding and presentation of RNA for ribonucleolysis, and to serve as a scaffold for the association with catalytic subunits and accessory proteins or complexes. EXOSC8 binds to ARE-containing RNAs. In Homo sapiens (Human), this protein is Exosome complex component RRP43 (EXOSC8).